Here is a 400-residue protein sequence, read N- to C-terminus: MQELDIAGVGSVRVTRKNDNVVVIEKDLATEQMILAMGPQHPSTHGVLKLECLTDGEVITEAEPYLGYLHRCFEKSCEHVDYPAIVPYTDRLDYLASMNSEQAYAMAVEKLLDIEIPRRVEFIRVIVAELNRIASHLVAIGTYGIDLGAFTPFLFCFRDREIILGLLEWASGARMLYNYIWIGGLAYDVPSDFFKRVGEFVTYFRPKAVELCNLLTENEIFVKRTRGIGIMPADVAINYGWSGPMLRGSGVKWDLRRNDPYSVYPELDFSVPVPDGKVSVVGDCLSRHLVRAYEMDESLKIIEQCIDKMPTAEGFNPRSAIPKRIRPKAGEVYARAENPRGELGFYIMSDGKSTKPLRCKARSSCFVNLSAMKDLSKGQLIPDLVAIIGSIDIVLGEVDR.

It belongs to the complex I 49 kDa subunit family. As to quaternary structure, NDH-1 is composed of 14 different subunits. Subunits NuoB, C, D, E, F, and G constitute the peripheral sector of the complex.

It is found in the cell inner membrane. The enzyme catalyses a quinone + NADH + 5 H(+)(in) = a quinol + NAD(+) + 4 H(+)(out). Its function is as follows. NDH-1 shuttles electrons from NADH, via FMN and iron-sulfur (Fe-S) centers, to quinones in the respiratory chain. The immediate electron acceptor for the enzyme in this species is believed to be a menaquinone. Couples the redox reaction to proton translocation (for every two electrons transferred, four hydrogen ions are translocated across the cytoplasmic membrane), and thus conserves the redox energy in a proton gradient. This chain is NADH-quinone oxidoreductase subunit D, found in Pelodictyon phaeoclathratiforme (strain DSM 5477 / BU-1).